Reading from the N-terminus, the 287-residue chain is MAEITAALVKELRERTGEGMMDCKKALTKAGGDIEKAIDDMRASGAIKAAKKAGNVAAEGAIAIKDDGKAAVIIEVNSQTDFLALQDDFKAFVAASVEKAFADKLTDVAPLIEAQEAARLVLVGKVGENVNIRRLKRIEGDVVGTYLHGNKIGVVVTLKGGNVELAKDIAMHVAASNPEFLFPSEVSAEAIEREKNVFLQLNEDKIKGKPAEIVEKMVGGRITKFLAEASLVEQAFVKNPEVKVGDLAKKAGAEIVSFTYFKVGDGIEKPVDNFADEVAAQLAAAKQ.

The tract at residues threonine 80–leucine 83 is involved in Mg(2+) ion dislocation from EF-Tu.

It belongs to the EF-Ts family.

The protein localises to the cytoplasm. Functionally, associates with the EF-Tu.GDP complex and induces the exchange of GDP to GTP. It remains bound to the aminoacyl-tRNA.EF-Tu.GTP complex up to the GTP hydrolysis stage on the ribosome. This chain is Elongation factor Ts, found in Pseudomonas savastanoi pv. phaseolicola (strain 1448A / Race 6) (Pseudomonas syringae pv. phaseolicola (strain 1448A / Race 6)).